The following is a 406-amino-acid chain: Interactor protein for cytohesin exchange factors 1 (406 aa).

The region spanning 13–112 is the PH domain; the sequence is HADCQGWLYK…WLNKLGFAVT (100 aa). Disordered regions lie at residues 118–173, 228–285, and 383–406; these read TKDE…FSSL, CRVS…EDDE, and PQDP…ENSL. A compositionally biased stretch (acidic residues) spans 123 to 134; it reads CYSESEQEDPET. Positions 144 to 160 are enriched in low complexity; it reads ASATSSPVAARRASSSS. Residues 228–239 show a composition bias toward polar residues; sequence CRVSENSSTTPE. Residues 243–259 show a composition bias toward low complexity; it reads LNSLSSDDTSSLNNSQD. Residues 272-285 show a composition bias toward basic and acidic residues; sequence MTDRDEIKSSEDDE. Positions 285–406 are necessary for interaction with PSCD2 and to translocate to the plasma membrane; the sequence is EMEKLYKSLE…TSSDCVENSL (122 aa). Residues 392–406 are compositionally biased toward polar residues; that stretch reads EIMNPTSSDCVENSL.

In terms of assembly, interacts with guanine-nucleotide exchange factors PSCD1, PSCD2, PSCD3 and PSCD4. Expressed in brain, spleen, lung, testis and kidney.

Its subcellular location is the cytoplasm. It localises to the cell membrane. In terms of biological role, enhances the promotion of guanine-nucleotide exchange by PSCD2 on ARF6 in a concentration-dependent manner. In Rattus norvegicus (Rat), this protein is Interactor protein for cytohesin exchange factors 1 (Ipcef1).